The sequence spans 217 residues: Photosynthetic NDH subunit of lumenal location 4, chloroplastic (217 aa).

A chloroplast-targeting transit peptide spans 1-34 (MAISTLTLTQSLYTRSFRPTIFFSSSSSSSFSCL). 2 disulfides stabilise this stretch: Cys87–Cys99 and Cys188–Cys193. Residues 112–211 (GVLVNIHYTA…LYDINFVEIY (100 aa)) form the PPIase FKBP-type domain.

This sequence belongs to the FKBP-type PPIase family. In terms of assembly, part of the chloroplast NDH complex, composed of a mixture of chloroplast and nucleus encoded subunits. Component of the NDH lumenal subcomplex, at least composed of PnsL1, PnsL2, PnsL3, PnsL4 and PnsL5.

It localises to the plastid. The protein localises to the chloroplast thylakoid lumen. It carries out the reaction [protein]-peptidylproline (omega=180) = [protein]-peptidylproline (omega=0). Functionally, NDH shuttles electrons from NAD(P)H:plastoquinone, via FMN and iron-sulfur (Fe-S) centers, to quinones in the photosynthetic chain and possibly in a chloroplast respiratory chain. The immediate electron acceptor for the enzyme in this species is believed to be plastoquinone. Couples the redox reaction to proton translocation, and thus conserves the redox energy in a proton gradient. PPIases accelerate the folding of proteins. It catalyzes the cis-trans isomerization of proline imidic peptide bonds in oligopeptides. Seems to be essential for stabilizing the NDH subcomplex A. This Arabidopsis thaliana (Mouse-ear cress) protein is Photosynthetic NDH subunit of lumenal location 4, chloroplastic.